The chain runs to 50 residues: Metallothionein zym1 (50 aa).

Positions 7, 15, 17, 21, 23, 26, 30, 32, 40, 42, 45, and 47 each coordinate Zn(2+).

Belongs to the metallothionein superfamily.

The protein localises to the cytoplasm. Its subcellular location is the nucleus. Metallothionein involved in tolerance to zinc and cadmium. Binds four zinc ions. In Schizosaccharomyces pombe (strain 972 / ATCC 24843) (Fission yeast), this protein is Metallothionein zym1 (zym1).